A 283-amino-acid polypeptide reads, in one-letter code: Pantothenate synthetase (283 aa).

ATP is bound at residue 30–37 (MGNLHQGH). H37 functions as the Proton donor in the catalytic mechanism. Q61 is a binding site for (R)-pantoate. Q61 provides a ligand contact to beta-alanine. 149-152 (GEKD) provides a ligand contact to ATP. A (R)-pantoate-binding site is contributed by Q155. ATP contacts are provided by residues V178 and 186–189 (FSSR).

The protein belongs to the pantothenate synthetase family. As to quaternary structure, homodimer.

The protein localises to the cytoplasm. It catalyses the reaction (R)-pantoate + beta-alanine + ATP = (R)-pantothenate + AMP + diphosphate + H(+). It functions in the pathway cofactor biosynthesis; (R)-pantothenate biosynthesis; (R)-pantothenate from (R)-pantoate and beta-alanine: step 1/1. In terms of biological role, catalyzes the condensation of pantoate with beta-alanine in an ATP-dependent reaction via a pantoyl-adenylate intermediate. The chain is Pantothenate synthetase from Proteus mirabilis (strain HI4320).